The following is a 337-amino-acid chain: HTH-type transcriptional repressor PurR (337 aa).

An HTH lacI-type domain is found at 2 to 56 (ATIKDVAKLAAVSTTTVSHVINKTRFVAEATQKRVWEAVEELNYAPSAVARSLKC). Residues 4 to 23 (IKDVAKLAAVSTTTVSHVIN) constitute a DNA-binding region (H-T-H motif). A DNA-binding region spans residues 48–56 (SAVARSLKC). Residues F73, K189, T191, F220, and D276 each contribute to the hypoxanthine site.

Homodimer.

Its pathway is purine metabolism; purine nucleotide biosynthesis [regulation]. Is the main repressor of the genes involved in the de novo synthesis of purine nucleotides, regulating purB, purC, purEK, purF, purHD, purL, purMN and guaBA expression. PurR is allosterically activated to bind its cognate DNA by binding the purine corepressors, hypoxanthine or guanine, thereby effecting transcription repression. This chain is HTH-type transcriptional repressor PurR, found in Aliivibrio fischeri (strain MJ11) (Vibrio fischeri).